We begin with the raw amino-acid sequence, 613 residues long: Portal protein (613 aa).

A disordered region spans residues 577 to 613; it reads ATGGDHGIRQAPSARGDAEPDHAKSKPARDPPPGAGS. Positions 592–605 are enriched in basic and acidic residues; sequence GDAEPDHAKSKPAR.

This sequence belongs to the herpesviridae portal protein family. As to quaternary structure, homododecamerizes. Interacts with terminase subunits TRM1 and TRM3.

The protein resides in the virion. Its subcellular location is the host nucleus. Forms a portal in the viral capsid through which viral DNA is translocated during DNA packaging. Assembles as a dodecamer at a single fivefold axe of the T=16 icosahedric capsid. Binds to the molecular motor that translocates the viral DNA, termed terminase. This Homo sapiens (Human) protein is Portal protein.